Consider the following 506-residue polypeptide: Sodium-coupled neutral amino acid symporter 2 (506 aa).

The disordered stretch occupies residues 1–23 (MKKAEMGRFSISPDEDSSSYSSN). Over 1-76 (MKKAEMGRFS…HPGTTSFGMS (76 aa)) the chain is Cytoplasmic. Positions 1–96 (MKKAEMGRFS…SGILGLSYAM (96 aa)) are regulates protein turnover upon amino acid deprivation. Residues Ser10, Ser12, Ser21, Ser22, and Ser55 each carry the phosphoserine modification. A helical transmembrane segment spans residues 77–96 (VFNLSNAIVGSGILGLSYAM). Position 82 (Asn82) interacts with Na(+). Residues 97–102 (ANTGIA) are Extracellular-facing. The chain crosses the membrane as a helical span at residues 103–123 (LFIILLTFVSIFSLYSVHLLL). Residues 124–158 (KTANEGGSLLYEQLGYKAFGLVGKLAASGSITMQN) are Cytoplasmic-facing. A helical transmembrane segment spans residues 159–177 (IGAMSSYLFIVKYELPLVI). Topologically, residues 178–188 (QALTNIEDKTG) are extracellular. Residues 189-209 (LWYLNGNYLVLLVSLVVILPL) traverse the membrane as a helical segment. The Cytoplasmic portion of the chain corresponds to 210 to 217 (SLFRNLGY). The helical transmembrane segment at 218 to 238 (LGYTSGLSLLCMVFFLIVVIC) threads the bilayer. At 239 to 292 (KKFQVPCPVEAALIINETINTTLTQPTALVPALSHNVTENDSCRPHYFIFNSQT) the chain is on the extracellular side. Cys245 and Cys281 are disulfide-bonded. N-linked (GlcNAc...) asparagine glycosylation is found at Asn258 and Asn274. The helical transmembrane segment at 293-313 (VYAVPILIFSFVCHPAVLPIY) threads the bilayer. Residues 314–329 (EELKDRSRRRMMNVSK) are Cytoplasmic-facing. The chain crosses the membrane as a helical span at residues 330-350 (ISFFAMFLMYLLAALFGYLTF). Residues 351-371 (YEHVESELLHTYSSILGTDIL) are Extracellular-facing. A helical membrane pass occupies residues 372 to 392 (LLIVRLAVLMAVTLTVPVVIF). Residue Thr386 coordinates Na(+). Topologically, residues 393–413 (PIRSSVTHLLCASKDFSWWRH) are cytoplasmic. The helical transmembrane segment at 414–434 (SLITVSILAFTNLLVIFVPTI) threads the bilayer. Topologically, residues 435-436 (RD) are extracellular. The helical transmembrane segment at 437 to 457 (IFGFIGASAASMLIFILPSAF) threads the bilayer. Over 458-472 (YIKLVKKEPMKSVQK) the chain is Cytoplasmic. The chain crosses the membrane as a helical span at residues 473–495 (IGALFFLLSGVLVMTGSMALIVL). Over 496 to 506 (DWVHNAPGGGH) the chain is Extracellular.

The protein belongs to the amino acid/polyamine transporter 2 family. Polyubiquitination by NEDD4L regulates the degradation and the activity of SLC38A2. In terms of tissue distribution, ubiquitously expressed. Expressed in neocortex. Widely expressed in the central nervous system with higher concentrations in caudal regions. Expressed by glutamatergic and GABAergic neurons together with astrocytes and other non-neuronal cells in the cerebral cortex (at protein level).

Its subcellular location is the cell membrane. It catalyses the reaction L-alanine(in) + Na(+)(in) = L-alanine(out) + Na(+)(out). The enzyme catalyses glycine(in) + Na(+)(in) = glycine(out) + Na(+)(out). The catalysed reaction is L-serine(in) + Na(+)(in) = L-serine(out) + Na(+)(out). It carries out the reaction L-proline(in) + Na(+)(in) = L-proline(out) + Na(+)(out). It catalyses the reaction L-methionine(in) + Na(+)(in) = L-methionine(out) + Na(+)(out). The enzyme catalyses L-histidine(in) + Na(+)(in) = L-histidine(out) + Na(+)(out). The catalysed reaction is L-asparagine(in) + Na(+)(in) = L-asparagine(out) + Na(+)(out). It carries out the reaction L-glutamine(in) + Na(+)(in) = L-glutamine(out) + Na(+)(out). It catalyses the reaction L-threonine(in) + Na(+)(in) = L-threonine(out) + Na(+)(out). The enzyme catalyses L-leucine(in) + Na(+)(in) = L-leucine(out) + Na(+)(out). The catalysed reaction is L-phenylalanine(in) + Na(+)(in) = L-phenylalanine(out) + Na(+)(out). Inhibited by N-methyl-D-glucamine. Inhibited by choline. Allosteric regulation of sodium ions binding by pH. In terms of biological role, symporter that cotransports neutral amino acids and sodium ions from the extracellular to the intracellular side of the cell membrane. The transport is pH-sensitive, Li(+)-intolerant, electrogenic, driven by the Na(+) electrochemical gradient and cotransports of neutral amino acids and sodium ions with a stoichiometry of 1:1. May function in the transport of amino acids at the blood-brain barrier. May function in the transport of amino acids in the supply of maternal nutrients to the fetus through the placenta. Maintains a key metabolic glutamine/glutamate balance underpinning retrograde signaling by dendritic release of the neurotransmitter glutamate. Transports L-proline in differentiating osteoblasts for the efficient synthesis of proline-enriched proteins and provides proline essential for osteoblast differentiation and bone formation during bone development. This is Sodium-coupled neutral amino acid symporter 2 from Homo sapiens (Human).